A 267-amino-acid chain; its full sequence is uncharacterized protein (267 aa).

One copy of the WD repeat lies at 50-90; sequence PGLNAVTASKFSPDGRWLLNIADGSGYVQLWDTAKGERVKT.

This is an uncharacterized protein from Deinococcus radiodurans (strain ATCC 13939 / DSM 20539 / JCM 16871 / CCUG 27074 / LMG 4051 / NBRC 15346 / NCIMB 9279 / VKM B-1422 / R1).